We begin with the raw amino-acid sequence, 89 residues long: Gamma-bungarotoxin (89 aa).

The signal sequence occupies residues 1–21; the sequence is MKTLLLTLVVVTIVCLDLGYT. Disulfide bonds link Cys24–Cys45, Cys27–Cys32, Cys38–Cys66, Cys70–Cys81, and Cys82–Cys87. The short motif at 54–56 is the Cell attachment site element; it reads RGD.

Belongs to the three-finger toxin family. Ancestral subfamily. Orphan group V sub-subfamily. Expressed by the venom gland.

It localises to the secreted. Exhibits M2 muscarinic acetylcholine receptor (CHRM2)-blocking activity, but has a weak binding activity toward nicotinic AChR. Moreover, it inhibits collagen-induced platelet aggregation. The chain is Gamma-bungarotoxin from Bungarus multicinctus (Many-banded krait).